A 346-amino-acid polypeptide reads, in one-letter code: Homeobox protein ceh-22 (346 aa).

Disordered stretches follow at residues Met1–Leu68 and Leu135–Arg190. Positions Ala9–Ser24 are enriched in low complexity. A compositionally biased stretch (polar residues) spans Glu25 to Thr44. Positions Ala49–Ala67 are enriched in low complexity. Polar residues predominate over residues Leu147–Asn156. Positions Glu166 to Asp182 are enriched in acidic residues. The homeobox DNA-binding region spans Lys189–His248.

Belongs to the NK-2 homeobox family.

The protein resides in the nucleus. In terms of biological role, involved in combinatorial activation of gene expression in pharyngeal muscle. Specifically binds a site necessary for activity of the B subelement of myo-2 enhancer. Its function is as follows. Regulates distal tip cell fate. In Caenorhabditis elegans, this protein is Homeobox protein ceh-22 (ceh-22).